The chain runs to 160 residues: 6,7-dimethyl-8-ribityllumazine synthase (160 aa).

5-amino-6-(D-ribitylamino)uracil contacts are provided by residues phenylalanine 23, 61 to 63 (SFE), and 85 to 87 (AVI). 90 to 91 (DT) provides a ligand contact to (2S)-2-hydroxy-3-oxobutyl phosphate. Histidine 93 functions as the Proton donor in the catalytic mechanism. Position 118 (phenylalanine 118) interacts with 5-amino-6-(D-ribitylamino)uracil. Arginine 132 serves as a coordination point for (2S)-2-hydroxy-3-oxobutyl phosphate.

The protein belongs to the DMRL synthase family.

The enzyme catalyses (2S)-2-hydroxy-3-oxobutyl phosphate + 5-amino-6-(D-ribitylamino)uracil = 6,7-dimethyl-8-(1-D-ribityl)lumazine + phosphate + 2 H2O + H(+). Its pathway is cofactor biosynthesis; riboflavin biosynthesis; riboflavin from 2-hydroxy-3-oxobutyl phosphate and 5-amino-6-(D-ribitylamino)uracil: step 1/2. Catalyzes the formation of 6,7-dimethyl-8-ribityllumazine by condensation of 5-amino-6-(D-ribitylamino)uracil with 3,4-dihydroxy-2-butanone 4-phosphate. This is the penultimate step in the biosynthesis of riboflavin. The chain is 6,7-dimethyl-8-ribityllumazine synthase from Parasynechococcus marenigrum (strain WH8102).